Reading from the N-terminus, the 338-residue chain is DNA-directed RNA polymerase subunit alpha (338 aa).

An alpha N-terminal domain (alpha-NTD) region spans residues 1–234 (MIQKNWQELI…DQLQLFINFE (234 aa)). An alpha C-terminal domain (alpha-CTD) region spans residues 250 to 338 (FNKNLLRKVD…ELAKKLEEPY (89 aa)).

It belongs to the RNA polymerase alpha chain family. Homodimer. The RNAP catalytic core consists of 2 alpha, 1 beta, 1 beta' and 1 omega subunit. When a sigma factor is associated with the core the holoenzyme is formed, which can initiate transcription.

The enzyme catalyses RNA(n) + a ribonucleoside 5'-triphosphate = RNA(n+1) + diphosphate. In terms of biological role, DNA-dependent RNA polymerase catalyzes the transcription of DNA into RNA using the four ribonucleoside triphosphates as substrates. In Paramagnetospirillum magneticum (strain ATCC 700264 / AMB-1) (Magnetospirillum magneticum), this protein is DNA-directed RNA polymerase subunit alpha.